The primary structure comprises 100 residues: Urease subunit gamma (100 aa).

It belongs to the urease gamma subunit family. Heterotrimer of UreA (gamma), UreB (beta) and UreC (alpha) subunits. Three heterotrimers associate to form the active enzyme.

It localises to the cytoplasm. It catalyses the reaction urea + 2 H2O + H(+) = hydrogencarbonate + 2 NH4(+). It functions in the pathway nitrogen metabolism; urea degradation; CO(2) and NH(3) from urea (urease route): step 1/1. This is Urease subunit gamma from Ralstonia pickettii (strain 12J).